Here is an 89-residue protein sequence, read N- to C-terminus: Large ribosomal subunit protein bL27 (89 aa).

The interval 1–22 is disordered; that stretch reads MAHKKAGGSSRNGRDSAGRRLG.

It belongs to the bacterial ribosomal protein bL27 family.

The protein is Large ribosomal subunit protein bL27 of Sphingopyxis alaskensis (strain DSM 13593 / LMG 18877 / RB2256) (Sphingomonas alaskensis).